The sequence spans 648 residues: Solute carrier family 23 member 2 (648 aa).

Residues 1 to 21 (MMGIGKNTASKSVEAGGSTEG) are disordered. Residues 9–110 (ASKSVEAGGS…LCIFLGLQHY (102 aa)) are Cytoplasmic-facing. S70 is subject to Phosphoserine. At T75 the chain carries Phosphothreonine. At S78 the chain carries Phosphoserine. Position 79 is a phosphothreonine (T79). S81 is subject to Phosphoserine. A helical membrane pass occupies residues 111 to 131 (LTCFSGTIAVPFLLADAMCVG). Residues 132–139 (DDQWATSQ) are Extracellular-facing. Residues 140–160 (LIGTIFFCVGITTLLQTTFGC) traverse the membrane as a helical segment. Position 161 (R161) is a topological domain, cytoplasmic. The chain crosses the membrane as a helical span at residues 162–182 (LPLFQASAFAFLAPARAILSL). At 183–216 (DKWKCNTTEITVANGTAELLEHIWHPRIQEIQGA) the chain is on the extracellular side. N188 and N196 each carry an N-linked (GlcNAc...) asparagine glycan. Residues 217-237 (IIMSSLIEVVIGLLGLPGALL) form a helical membrane-spanning segment. At 238-264 (RYIGPLTITPTVALIGLSGFQAAGERA) the chain is on the cytoplasmic side. Residues 265–282 (GKHWGIAMLTIFLVLLFS) form a helical membrane-spanning segment. Topologically, residues 283–286 (QYAR) are extracellular. The segment at residues 287 to 300 (NVKFPLPIYKSKKG) is an intramembrane region (helical). Residues 301–307 (WTAYKFQ) lie on the Extracellular side of the membrane. The chain crosses the membrane as a helical span at residues 308-328 (LFKMFPIILAILVSWLLCFIF). At 329–369 (TVTDVFPSNSTDYGYYARTDARKGVLLVAPWFKVPYPFQWG) the chain is on the cytoplasmic side. A helical transmembrane segment spans residues 370–390 (MPTVSAAGVIGMLSAVVASII). Residues 391–415 (ESIGDYYACARLSCAPPPPIHAINR) are Extracellular-facing. A helical membrane pass occupies residues 416–436 (GIFVEGLSCVLDGIFGTGNGS). Residues 437–459 (TSSSPNIGVLGITKVGSRRVIQY) are Cytoplasmic-facing. Residues 460-480 (GAALMLGLGMVGKFSALFASL) form a helical membrane-spanning segment. The Extracellular segment spans residues 481-483 (PDP). A helical membrane pass occupies residues 484–504 (VLGALFCTLFGMITAVGLSNL). Residues 505–514 (QFIDLNSSRN) lie on the Cytoplasmic side of the membrane. Residues 515 to 535 (LFVLGFSIFFGLVLPSYLRQN) form a helical membrane-spanning segment. At 536–545 (PLVTGITGID) the chain is on the extracellular side. A helical transmembrane segment spans residues 546 to 566 (QILNVLLTTAMFVGGCVAFIL). Residues 567–648 (DNTIPGTPEE…SSDKDSQATV (82 aa)) are Cytoplasmic-facing. Phosphothreonine is present on T647.

It belongs to the nucleobase:cation symporter-2 (NCS2) (TC 2.A.40) family. As to quaternary structure, interacts with CLSTN3. In terms of processing, phosphorylated. In terms of tissue distribution, expressed in metabolically active and specialized tissues, including high expression in brain and adrenals. Detected in a wide range of tissues. Expression in kidney is almost undetectable.

It is found in the cell membrane. It catalyses the reaction L-ascorbate(out) + 2 Na(+)(out) = L-ascorbate(in) + 2 Na(+)(in). Functionally, sodium/ascorbate cotransporter. Mediates electrogenic uptake of vitamin C, with a stoichiometry of 2 Na(+) for each ascorbate. This Mus musculus (Mouse) protein is Solute carrier family 23 member 2 (Slc23a2).